Consider the following 779-residue polypeptide: Catalase-peroxidase (779 aa).

The segment at residues 148–270 (WHSAGTYRIT…LGAVQMGLIY (123 aa)) is a cross-link (tryptophyl-tyrosyl-methioninium (Trp-Tyr) (with M-296)). The Proton acceptor role is filled by His-149. A cross-link (tryptophyl-tyrosyl-methioninium (Tyr-Met) (with W-148)) is located at residues 270–296 (YVNPEGPNGKPDPIAAAKDIRETFFRM). Heme b is bound at residue His-311.

Belongs to the peroxidase family. Peroxidase/catalase subfamily. In terms of assembly, homodimer or homotetramer. The cofactor is heme b. Formation of the three residue Trp-Tyr-Met cross-link is important for the catalase, but not the peroxidase activity of the enzyme.

The enzyme catalyses H2O2 + AH2 = A + 2 H2O. It catalyses the reaction 2 H2O2 = O2 + 2 H2O. In terms of biological role, bifunctional enzyme with both catalase and broad-spectrum peroxidase activity. The sequence is that of Catalase-peroxidase from Bradyrhizobium diazoefficiens (strain JCM 10833 / BCRC 13528 / IAM 13628 / NBRC 14792 / USDA 110).